Reading from the N-terminus, the 743-residue chain is Pentatricopeptide repeat-containing protein At2g16880 (743 aa).

PPR repeat units follow at residues 130–164 (SKAL…KLKP), 165–202 (NLLT…GVSL), 203–233 (NVQT…MVSE), 239–273 (DNVT…GLVP), 274–308 (NRVT…NVLP), 309–343 (DLCT…KLQP), 344–378 (DVVT…GVKA), 379–414 (NQVT…GFSP), 415–449 (DIVT…GIKM), 450–484 (NTIT…GFIV), 485–519 (DEVT…KITP), 520–554 (TVST…GLLP), 555–589 (DDST…SFKP), 590–620 (DNYT…LIEE), 624–658 (DTVT…GLEP), and 659–689 (DRFT…FSGK).

It belongs to the PPR family. P subfamily.

In Arabidopsis thaliana (Mouse-ear cress), this protein is Pentatricopeptide repeat-containing protein At2g16880.